The primary structure comprises 136 residues: Transcription antitermination protein NusB (136 aa).

Belongs to the NusB family.

Functionally, involved in transcription antitermination. Required for transcription of ribosomal RNA (rRNA) genes. Binds specifically to the boxA antiterminator sequence of the ribosomal RNA (rrn) operons. The protein is Transcription antitermination protein NusB of Pseudoalteromonas translucida (strain TAC 125).